A 626-amino-acid chain; its full sequence is ABC transporter G family member 8 (626 aa).

Residues 56–300 form the ABC transporter domain; sequence VNLDNKTENS…SLGYPCPNNT (245 aa). 90-97 is a binding site for ATP; sequence GPSGSGKS. The ABC transmembrane type-2 domain maps to 373-621; the sequence is GNALSRVITA…SLSYFALHFL (249 aa). Helical transmembrane passes span 376-396, 409-429, 447-467, 485-505, 515-535, 543-563, and 600-620; these read LSRV…FAGL, TLFF…TLFL, FPYF…VTLV, FFFA…FISS, LTFS…GFYV, AFGW…VVIN, and FGVL…ALHF.

The protein belongs to the ABC transporter superfamily. ABCG family. Eye pigment precursor importer (TC 3.A.1.204) subfamily.

It is found in the membrane. The sequence is that of ABC transporter G family member 8 (abcG8) from Dictyostelium discoideum (Social amoeba).